We begin with the raw amino-acid sequence, 496 residues long: Anaerobic nitric oxide reductase flavorubredoxin (496 aa).

Residues 30-210 (TKGTSYNSYL…PFSALVTAKI (181 aa)) are zinc metallo-hydrolase. His-79, Glu-81, Asp-83, His-147, Asp-166, and His-227 together coordinate Fe cation. One can recognise a Flavodoxin-like domain in the interval 254–393 (ITIFYDSMSN…LCREHGQFIA (140 aa)). FMN contacts are provided by residues 260-264 (SMSNN) and 342-369 (AFGSYGWNGGAVDRIHSRLTDAGFETAV). A Rubredoxin-like domain is found at 444 to 495 (KQCMLCSVCNWVYDPEIGEPNQGVEPNTPWSSVPNDFLCPECHLGKDVFVEI). 4 residues coordinate Fe cation: Cys-449, Cys-452, Cys-482, and Cys-485.

It in the N-terminal section; belongs to the zinc metallo-hydrolase group 3 family. In terms of assembly, homotetramer. Fe cation is required as a cofactor. Requires FMN as cofactor.

The protein resides in the cytoplasm. It participates in nitrogen metabolism; nitric oxide reduction. In terms of biological role, anaerobic nitric oxide reductase; uses NADH to detoxify nitric oxide (NO), protecting several 4Fe-4S NO-sensitive enzymes. Has at least 2 reductase partners, only one of which (NorW, flavorubredoxin reductase) has been identified. NO probably binds to the di-iron center; electrons enter from the NorW at rubredoxin and are transferred sequentially to the FMN center and the di-iron center. Also able to function as an aerobic oxygen reductase. In Aliivibrio fischeri (strain ATCC 700601 / ES114) (Vibrio fischeri), this protein is Anaerobic nitric oxide reductase flavorubredoxin.